The primary structure comprises 479 residues: Ammonium transporter 3 member 2 (479 aa).

The next 11 membrane-spanning stretches (helical) occupy residues 34-54, 59-79, 139-159, 164-184, 202-222, 237-257, 272-292, 297-317, 321-341, 355-375, and 407-427; these read VAAT…YGGV, WAVN…ICWV, VVYF…GSLL, FLAW…VGAF, GGYV…YWVG, ILFT…FNGG, NTNI…VIFF, VVGA…AAGV, WAAL…MMIL, LGVF…TGLF, and IAGG…ICLA.

The protein belongs to the ammonia transporter channel (TC 1.A.11.2) family.

Its subcellular location is the membrane. Its function is as follows. Involved in ammonium transport. The protein is Ammonium transporter 3 member 2 (AMT3-2) of Oryza sativa subsp. japonica (Rice).